We begin with the raw amino-acid sequence, 64 residues long: Small ribosomal subunit protein eS17 (64 aa).

This sequence belongs to the eukaryotic ribosomal protein eS17 family.

The protein is Small ribosomal subunit protein eS17 of Methanosarcina barkeri (strain Fusaro / DSM 804).